A 236-amino-acid polypeptide reads, in one-letter code: Phosphoribosylaminoimidazole-succinocarboxamide synthase (236 aa).

Belongs to the SAICAR synthetase family.

The enzyme catalyses 5-amino-1-(5-phospho-D-ribosyl)imidazole-4-carboxylate + L-aspartate + ATP = (2S)-2-[5-amino-1-(5-phospho-beta-D-ribosyl)imidazole-4-carboxamido]succinate + ADP + phosphate + 2 H(+). Its pathway is purine metabolism; IMP biosynthesis via de novo pathway; 5-amino-1-(5-phospho-D-ribosyl)imidazole-4-carboxamide from 5-amino-1-(5-phospho-D-ribosyl)imidazole-4-carboxylate: step 1/2. In Rickettsia canadensis (strain McKiel), this protein is Phosphoribosylaminoimidazole-succinocarboxamide synthase.